Reading from the N-terminus, the 143-residue chain is MRVYVLNGPNLGRLGTRQPEVYGTTTYADLVELCQRTGRELGLEVVVRQTDAEHELLGWLHEAADLGAAVVLNPAAWSHYSVAVRDACALLRAPLVEVHISNIHAREPFRHQSVVSAVATGVICGLGVDGYRLALYHLAARHR.

Y22 (proton acceptor) is an active-site residue. Substrate contacts are provided by N73, H79, and D86. The active-site Proton donor is H99. Substrate contacts are provided by residues 100 to 101 (IS) and R110.

The protein belongs to the type-II 3-dehydroquinase family. In terms of assembly, homododecamer.

The enzyme catalyses 3-dehydroquinate = 3-dehydroshikimate + H2O. It functions in the pathway metabolic intermediate biosynthesis; chorismate biosynthesis; chorismate from D-erythrose 4-phosphate and phosphoenolpyruvate: step 3/7. Catalyzes a trans-dehydration via an enolate intermediate. The polypeptide is 3-dehydroquinate dehydratase (Salinispora arenicola (strain CNS-205)).